A 256-amino-acid polypeptide reads, in one-letter code: MGRGRVQLKRIENKINRQVTFSKRRAGLFKKAHEISVLCDAEVALVVFSHKGKLFEYSTDSCMEKILERYERYSYAERQLIAPESDVNTNWSMEYNRLKAKIELLERNQRHYLGEDLQAMSPKELQNLEQQLDTALKHIRSRKNQLMYDSVNELQRKEKAIQEQNSMLSKQIKEREKVLRAQQEQWDQQNHGQNMPPPPPPQEHQIQHPYMLSHQPSPFLNMGGLYEEEDPMAMRRNDLDLSLEPVYNCNLGCFAS.

The region spanning 1-61 (MGRGRVQLKR…GKLFEYSTDS (61 aa)) is the MADS-box domain. The 91-residue stretch at 88–178 (NTNWSMEYNR…SKQIKEREKV (91 aa)) folds into the K-box domain. The tract at residues 180–206 (RAQQEQWDQQNHGQNMPPPPPPQEHQI) is disordered.

Homodimer capable of binding to CArG-box sequences.

The protein localises to the nucleus. Its function is as follows. Transcription factor that promotes early floral meristem identity in synergy with LEAFY. Displays a redundant function with CAULIFLOWER in the up-regulation of LEAFY. Required subsequently for the transition of an inflorescence meristem into a floral meristem, and for the normal development of sepals and petals in flowers. Regulates positively B class homeotic proteins. This chain is Floral homeotic protein APETALA 1 (AP1), found in Brassica rapa subsp. pekinensis (Chinese cabbage).